A 461-amino-acid polypeptide reads, in one-letter code: Siroheme synthase (461 aa).

The segment at 1–204 (MDYFPIFCQL…GDTTQAQQQV (204 aa)) is precorrin-2 dehydrogenase /sirohydrochlorin ferrochelatase. Residues 22–23 (EV) and 43–44 (GR) contribute to the NAD(+) site. Serine 128 carries the phosphoserine modification. The tract at residues 216–461 (GEVTLVGAGP…NWFRCEAASA (246 aa)) is uroporphyrinogen-III C-methyltransferase. Proline 225 is a binding site for S-adenosyl-L-methionine. Aspartate 248 functions as the Proton acceptor in the catalytic mechanism. The Proton donor role is filled by lysine 270. S-adenosyl-L-methionine is bound by residues 301–303 (GGD), isoleucine 306, 331–332 (TA), methionine 382, and glycine 411.

It in the N-terminal section; belongs to the precorrin-2 dehydrogenase / sirohydrochlorin ferrochelatase family. The protein in the C-terminal section; belongs to the precorrin methyltransferase family.

It carries out the reaction uroporphyrinogen III + 2 S-adenosyl-L-methionine = precorrin-2 + 2 S-adenosyl-L-homocysteine + H(+). The enzyme catalyses precorrin-2 + NAD(+) = sirohydrochlorin + NADH + 2 H(+). The catalysed reaction is siroheme + 2 H(+) = sirohydrochlorin + Fe(2+). Its pathway is cofactor biosynthesis; adenosylcobalamin biosynthesis; precorrin-2 from uroporphyrinogen III: step 1/1. It participates in cofactor biosynthesis; adenosylcobalamin biosynthesis; sirohydrochlorin from precorrin-2: step 1/1. The protein operates within porphyrin-containing compound metabolism; siroheme biosynthesis; precorrin-2 from uroporphyrinogen III: step 1/1. It functions in the pathway porphyrin-containing compound metabolism; siroheme biosynthesis; siroheme from sirohydrochlorin: step 1/1. Its pathway is porphyrin-containing compound metabolism; siroheme biosynthesis; sirohydrochlorin from precorrin-2: step 1/1. Functionally, multifunctional enzyme that catalyzes the SAM-dependent methylations of uroporphyrinogen III at position C-2 and C-7 to form precorrin-2 via precorrin-1. Then it catalyzes the NAD-dependent ring dehydrogenation of precorrin-2 to yield sirohydrochlorin. Finally, it catalyzes the ferrochelation of sirohydrochlorin to yield siroheme. The protein is Siroheme synthase of Edwardsiella ictaluri (strain 93-146).